The primary structure comprises 266 residues: Probable catechol O-methyltransferase 1 (266 aa).

7 residues coordinate S-adenosyl-L-methionine: Ile56, Glu78, Ser86, Glu106, Val107, Ala135, and Asp162. Asp162 serves as a coordination point for Mg(2+). Position 165 (Lys165) interacts with substrate. 2 residues coordinate Mg(2+): Asp190 and Asn191. Asn191 contributes to the substrate binding site.

This sequence belongs to the class I-like SAM-binding methyltransferase superfamily. Cation-dependent O-methyltransferase family. Mg(2+) serves as cofactor.

It localises to the cytoplasm. The protein localises to the nucleus. It catalyses the reaction a catechol + S-adenosyl-L-methionine = a guaiacol + S-adenosyl-L-homocysteine + H(+). In Schizosaccharomyces pombe (strain 972 / ATCC 24843) (Fission yeast), this protein is Probable catechol O-methyltransferase 1.